Here is a 184-residue protein sequence, read N- to C-terminus: ATP-dependent protease subunit HslV (184 aa).

Thr-12 is a catalytic residue. Positions 166, 169, and 172 each coordinate Na(+).

It belongs to the peptidase T1B family. HslV subfamily. A double ring-shaped homohexamer of HslV is capped on each side by a ring-shaped HslU homohexamer. The assembly of the HslU/HslV complex is dependent on binding of ATP.

Its subcellular location is the cytoplasm. It carries out the reaction ATP-dependent cleavage of peptide bonds with broad specificity.. Its activity is regulated as follows. Allosterically activated by HslU binding. Its function is as follows. Protease subunit of a proteasome-like degradation complex believed to be a general protein degrading machinery. This chain is ATP-dependent protease subunit HslV, found in Nitrobacter hamburgensis (strain DSM 10229 / NCIMB 13809 / X14).